An 868-amino-acid chain; its full sequence is mRNA-capping enzyme (868 aa).

Lysine 282 acts as the N6-GMP-lysine intermediate in catalysis. The mRNA cap 0 methyltransferase domain maps to 594–868; that stretch reads GIYRAQTALI…LFGFICLRKN (275 aa). S-adenosyl-L-methionine is bound by residues lysine 607, glycine 624, aspartate 646, and 710–712; that span reads LFI.

The protein in the N-terminal section; belongs to the dsDNA virus mRNA guanylyltransferase family. It in the C-terminal section; belongs to the class I-like SAM-binding methyltransferase superfamily. mRNA cap 0 methyltransferase family. In terms of assembly, part of the viral DNA-directed RNA polymerase that consists of 8 polII-like subunits (RPB1, RPB2, RPB3, RPB5, RPB6, RPB7, RPB9, RPB10), a capping enzyme and a termination factor.

The protein resides in the virion. The enzyme catalyses a 5'-end triphospho-ribonucleoside in mRNA + H2O = a 5'-end diphospho-ribonucleoside in mRNA + phosphate + H(+). The catalysed reaction is a 5'-end diphospho-ribonucleoside in mRNA + GTP + H(+) = a 5'-end (5'-triphosphoguanosine)-ribonucleoside in mRNA + diphosphate. It carries out the reaction a 5'-end (5'-triphosphoguanosine)-ribonucleoside in mRNA + S-adenosyl-L-methionine = a 5'-end (N(7)-methyl 5'-triphosphoguanosine)-ribonucleoside in mRNA + S-adenosyl-L-homocysteine. The protein operates within mRNA processing; mRNA capping. Probably catalyzes the second reaction in the mRNA cap formation pathway. Forms a covalent complex with GTP. This Ornithodoros (relapsing fever ticks) protein is mRNA-capping enzyme.